The chain runs to 625 residues: E3 ubiquitin-protein ligase synoviolin (625 aa).

The Cytoplasmic segment spans residues 1 to 4 (MVRA). Residues 5–25 (ALVTATSLALTGAVVAHAYFL) traverse the membrane as a helical segment. Over 26–40 (KHQFYPTVVYLTKSS) the chain is Lumenal. A helical membrane pass occupies residues 41–61 (PSMAVLYIQAFVLVFLLGKLM). The Cytoplasmic segment spans residues 62–98 (RKVFFGQLRAAEMEHLIERSWYAVTETCLAFTVFRDD). The helical transmembrane segment at 99–119 (FSPRFVALFTLLLFLKCFHWL) threads the bilayer. Topologically, residues 120–135 (AEDRVDFMERSPNISW) are lumenal. A helical transmembrane segment spans residues 136 to 156 (VFHFRVLSLMVLLGVMDFLFV). Over 157–169 (NHACHSIITRGAS) the chain is Cytoplasmic. Residues 170 to 190 (VQLVFGFEYAILMTMVLTTFI) form a helical membrane-spanning segment. The Lumenal segment spans residues 191–212 (KYTLHTIDLQSENPWDNKAVYM). A helical transmembrane segment spans residues 213–235 (LYTELFTGFIKVLLYMAFMTIMI). The interval 236 to 270 (KVHTFPLFAIRPMYLAMRQFKKAVTDAIMSRRAIR) is interaction with p53/TP53. The Cytoplasmic segment spans residues 236-625 (KVHTFPLFAI…GNLLKLASVN (390 aa)). The Zn(2+) site is built by Cys291, Cys294, Cys307, His309, His312, Cys315, Cys326, and Cys329. An RING-type; atypical zinc finger spans residues 291–330 (CIICREEMVTGAKKLPCNHIFHSSCLRSWFQRQQTCPTCR). 4 disordered regions span residues 337-361 (SQPN…NAPI), 390-434 (PPPA…SAAP), 462-487 (FMSS…LEQE), and 523-625 (LSPP…ASVN). Positions 342 to 361 (TPAPPAAQAPAPPAPANAPI) are enriched in pro residues. Low complexity predominate over residues 423-434 (AQSTAEAASAAP). Over residues 462–471 (FMSSMPPPPS) the composition is skewed to pro residues. The segment covering 523–564 (LSPPRSETNTGETSESANVESSPSTANTETAGQEIQSQSGES) has biased composition (polar residues).

Belongs to the HRD1 family. Homodimer.

The protein resides in the endoplasmic reticulum membrane. The catalysed reaction is S-ubiquitinyl-[E2 ubiquitin-conjugating enzyme]-L-cysteine + [acceptor protein]-L-lysine = [E2 ubiquitin-conjugating enzyme]-L-cysteine + N(6)-ubiquitinyl-[acceptor protein]-L-lysine.. It participates in protein modification; protein ubiquitination. E3 ubiquitin-protein ligase which accepts ubiquitin specifically from endoplasmic reticulum-associated UBC7 E2 ligase and transfers it to substrates, promoting their degradation. Component of the endoplasmic reticulum quality control (ERQC) system also called ER-associated degradation (ERAD) involved in ubiquitin-dependent degradation of misfolded endoplasmic reticulum proteins. Also promotes the degradation of normal but naturally short-lived proteins. Protects cells from ER stress-induced apoptosis. Sequesters p53 in the cytoplasm and promotes its degradation, thereby negatively regulating its biological function in transcription, cell cycle regulation and apoptosis. This chain is E3 ubiquitin-protein ligase synoviolin (syvn1), found in Danio rerio (Zebrafish).